The chain runs to 274 residues: Dehydration-responsive element-binding protein 2A (274 aa).

2 stretches are compositionally biased toward basic and acidic residues: residues 1–10 (MERGEGRRGD) and 35–50 (KWWK…ENSS). The disordered stretch occupies residues 1–75 (MERGEGRRGD…KGGPENSNCA (75 aa)). Positions 75 to 132 (AYRGVRQRTWGKWVAEIREPNRGRRLWLGSFPTALEAAHAYDEAARAMYGPTARVNFA) form a DNA-binding region, AP2/ERF.

Belongs to the AP2/ERF transcription factor family. ERF subfamily.

The protein resides in the nucleus. Functionally, transcriptional activator that binds specifically to the DNA sequence 5'-[AG]CCGAC-3' of the cis-acting dehydration-responsive element (DRE). Binding to the C-repeat/DRE element mediates high salinity- and dehydration-inducible transcription. The sequence is that of Dehydration-responsive element-binding protein 2A (DREB2A) from Oryza sativa subsp. japonica (Rice).